Reading from the N-terminus, the 637-residue chain is Extracellular metalloproteinase 10 (637 aa).

The first 19 residues, methionine 1–alanine 19, serve as a signal peptide directing secretion. Residues histidine 20–histidine 245 constitute a propeptide that is removed on maturation. N-linked (GlcNAc...) asparagine glycosylation is present at asparagine 282. Residue histidine 429 coordinates Zn(2+). The active site involves glutamate 430. Residue histidine 433 coordinates Zn(2+). A glycan (N-linked (GlcNAc...) asparagine) is linked at asparagine 502.

The protein belongs to the peptidase M36 family. Zn(2+) serves as cofactor.

It localises to the secreted. In terms of biological role, secreted metalloproteinase that allows assimilation of proteinaceous substrates. The polypeptide is Extracellular metalloproteinase 10 (MEP10) (Uncinocarpus reesii (strain UAMH 1704)).